Consider the following 130-residue polypeptide: MAKVQYWGTGRRKEAVARVRLVPGEGNIIINNRSFEDFFPNQTSRLIVQQPLVLTAMQGRFDIICRVNGGGVSGQAGAIQLGIARALLKANPDIKAMLRRSGFLTRDPRMKERKKYGLHKARKAPQYSKR.

A disordered region spans residues 105-130 (TRDPRMKERKKYGLHKARKAPQYSKR). Positions 111–130 (KERKKYGLHKARKAPQYSKR) are enriched in basic residues.

This sequence belongs to the universal ribosomal protein uS9 family.

The chain is Small ribosomal subunit protein uS9 from Syntrophomonas wolfei subsp. wolfei (strain DSM 2245B / Goettingen).